The sequence spans 91 residues: Small ribosomal subunit protein bS20 (91 aa).

Belongs to the bacterial ribosomal protein bS20 family.

In terms of biological role, binds directly to 16S ribosomal RNA. The sequence is that of Small ribosomal subunit protein bS20 from Acidithiobacillus ferrooxidans (strain ATCC 23270 / DSM 14882 / CIP 104768 / NCIMB 8455) (Ferrobacillus ferrooxidans (strain ATCC 23270)).